Consider the following 351-residue polypeptide: Glycerol-1-phosphate dehydrogenase [NAD(P)+] (351 aa).

NAD(+) contacts are provided by residues 97 to 101 (GKVID) and 119 to 122 (TSPS). Residue aspartate 124 participates in substrate binding. Serine 128 contributes to the NAD(+) binding site. Aspartate 171 lines the substrate pocket. Zn(2+) is bound by residues aspartate 171 and histidine 251. Position 255 (histidine 255) interacts with substrate. Zn(2+) is bound at residue histidine 267.

This sequence belongs to the glycerol-1-phosphate dehydrogenase family. As to quaternary structure, homodimer. Zn(2+) serves as cofactor.

It is found in the cytoplasm. The enzyme catalyses sn-glycerol 1-phosphate + NAD(+) = dihydroxyacetone phosphate + NADH + H(+). It catalyses the reaction sn-glycerol 1-phosphate + NADP(+) = dihydroxyacetone phosphate + NADPH + H(+). It functions in the pathway membrane lipid metabolism; glycerophospholipid metabolism. Functionally, catalyzes the NAD(P)H-dependent reduction of dihydroxyacetonephosphate (DHAP or glycerone phosphate) to glycerol 1-phosphate (G1P). The G1P thus generated is used as the glycerophosphate backbone of phospholipids in the cellular membranes of Archaea. The sequence is that of Glycerol-1-phosphate dehydrogenase [NAD(P)+] from Saccharolobus islandicus (strain Y.N.15.51 / Yellowstone #2) (Sulfolobus islandicus).